A 484-amino-acid chain; its full sequence is tRNA sulfurtransferase (484 aa).

The THUMP domain maps to glutamate 63–arginine 167. ATP-binding positions include leucine 185–isoleucine 186, lysine 267, glycine 289, and glutamine 298. Cysteine 346 and cysteine 458 form a disulfide bridge. The Rhodanese domain maps to isoleucine 406 to proline 484. Cysteine 458 acts as the Cysteine persulfide intermediate in catalysis.

This sequence belongs to the ThiI family.

The protein localises to the cytoplasm. It catalyses the reaction [ThiI sulfur-carrier protein]-S-sulfanyl-L-cysteine + a uridine in tRNA + 2 reduced [2Fe-2S]-[ferredoxin] + ATP + H(+) = [ThiI sulfur-carrier protein]-L-cysteine + a 4-thiouridine in tRNA + 2 oxidized [2Fe-2S]-[ferredoxin] + AMP + diphosphate. The catalysed reaction is [ThiS sulfur-carrier protein]-C-terminal Gly-Gly-AMP + S-sulfanyl-L-cysteinyl-[cysteine desulfurase] + AH2 = [ThiS sulfur-carrier protein]-C-terminal-Gly-aminoethanethioate + L-cysteinyl-[cysteine desulfurase] + A + AMP + 2 H(+). It functions in the pathway cofactor biosynthesis; thiamine diphosphate biosynthesis. In terms of biological role, catalyzes the ATP-dependent transfer of a sulfur to tRNA to produce 4-thiouridine in position 8 of tRNAs, which functions as a near-UV photosensor. Also catalyzes the transfer of sulfur to the sulfur carrier protein ThiS, forming ThiS-thiocarboxylate. This is a step in the synthesis of thiazole, in the thiamine biosynthesis pathway. The sulfur is donated as persulfide by IscS. The sequence is that of tRNA sulfurtransferase from Shewanella woodyi (strain ATCC 51908 / MS32).